The sequence spans 105 residues: Guanidinium exporter (105 aa).

A topological domain (cytoplasmic) is located at residue Met-1. The helical transmembrane segment at 2-19 (SWIVLLIAGLLEVVWAIG) threads the bilayer. Topologically, residues 20 to 28 (LKYTHGFTR) are periplasmic. Residues 29-48 (LTPSIITIAAMIVSIAMLSW) form a helical membrane-spanning segment. Over 49–54 (AMRTLP) the chain is Cytoplasmic. The helical transmembrane segment at 55 to 77 (VGTAYAVWTGIGAVGAAITGILL) threads the bilayer. The Periplasmic portion of the chain corresponds to 78–86 (LGESASPAR). Residues 87-104 (LLSLGLIVAGIIGLKLST) traverse the membrane as a helical segment. A topological domain (cytoplasmic) is located at residue His-105.

This sequence belongs to the drug/metabolite transporter (DMT) superfamily. Small multidrug resistance (SMR) (TC 2.A.7.1) family. Gdx/SugE subfamily.

The protein localises to the cell inner membrane. Guanidinium ion exporter. Couples guanidinium export to the proton motive force, exchanging one guanidinium ion for two protons. This Citrobacter freundii protein is Guanidinium exporter.